The primary structure comprises 245 residues: Ribonuclease 3 (245 aa).

One can recognise an RNase III domain in the interval 19-148; that stretch reads FKLFQEKIGI…FIGALYLDQG (130 aa). E61 contributes to the Mg(2+) binding site. Residue D65 is part of the active site. Mg(2+)-binding residues include D134 and E137. E137 is an active-site residue. A DRBM domain is found at 174 to 243; sequence DYKSQLQELI…AAEALKKLKE (70 aa).

This sequence belongs to the ribonuclease III family. In terms of assembly, homodimer. Requires Mg(2+) as cofactor.

The protein localises to the cytoplasm. The catalysed reaction is Endonucleolytic cleavage to 5'-phosphomonoester.. Digests double-stranded RNA. Involved in the processing of primary rRNA transcript to yield the immediate precursors to the large and small rRNAs (23S and 16S). Processes some mRNAs, and tRNAs when they are encoded in the rRNA operon. Processes pre-crRNA and tracrRNA of type II CRISPR loci if present in the organism. In Bacillus cereus (strain 03BB102), this protein is Ribonuclease 3.